The sequence spans 154 residues: Endoribonuclease YbeY (154 aa).

The Zn(2+) site is built by H114, H118, and H124.

It belongs to the endoribonuclease YbeY family. Requires Zn(2+) as cofactor.

Its subcellular location is the cytoplasm. Single strand-specific metallo-endoribonuclease involved in late-stage 70S ribosome quality control and in maturation of the 3' terminus of the 16S rRNA. This Haemophilus influenzae (strain ATCC 51907 / DSM 11121 / KW20 / Rd) protein is Endoribonuclease YbeY.